Reading from the N-terminus, the 182-residue chain is MIKLTQEEQKYLLDSIRIIPDFPKKGIIFRDITTLLNNKEALNFLLKHLKERYKDYNLDFIAGTESRGFIFASMICAKLNLPFVPIRKPGKLPFETFSCEYDLEYGSDKVELHKDAFKNIQNARVLLVDDLIATGGTAIASYELIQKAGAKCVEACFLMNLKDLNGANKLEKLTSVYSVLEI.

The protein belongs to the purine/pyrimidine phosphoribosyltransferase family. Homodimer.

The protein localises to the cytoplasm. It carries out the reaction AMP + diphosphate = 5-phospho-alpha-D-ribose 1-diphosphate + adenine. The protein operates within purine metabolism; AMP biosynthesis via salvage pathway; AMP from adenine: step 1/1. Functionally, catalyzes a salvage reaction resulting in the formation of AMP, that is energically less costly than de novo synthesis. This chain is Adenine phosphoribosyltransferase, found in Campylobacter jejuni subsp. doylei (strain ATCC BAA-1458 / RM4099 / 269.97).